Here is a 464-residue protein sequence, read N- to C-terminus: Kynureninase 2 (464 aa).

Residues Leu135, Thr136, 163 to 166, Asp248, His251, and Tyr273 contribute to the pyridoxal 5'-phosphate site; that span reads FPSD. Residue Lys274 is modified to N6-(pyridoxal phosphate)lysine. Residues Trp313 and Asn341 each contribute to the pyridoxal 5'-phosphate site.

The protein belongs to the kynureninase family. Homodimer. The cofactor is pyridoxal 5'-phosphate.

It localises to the cytoplasm. The enzyme catalyses L-kynurenine + H2O = anthranilate + L-alanine + H(+). The catalysed reaction is 3-hydroxy-L-kynurenine + H2O = 3-hydroxyanthranilate + L-alanine + H(+). It participates in amino-acid degradation; L-kynurenine degradation; L-alanine and anthranilate from L-kynurenine: step 1/1. The protein operates within cofactor biosynthesis; NAD(+) biosynthesis; quinolinate from L-kynurenine: step 2/3. Catalyzes the cleavage of L-kynurenine (L-Kyn) and L-3-hydroxykynurenine (L-3OHKyn) into anthranilic acid (AA) and 3-hydroxyanthranilic acid (3-OHAA), respectively. This Aspergillus fumigatus (strain CBS 144.89 / FGSC A1163 / CEA10) (Neosartorya fumigata) protein is Kynureninase 2 (bna5-2).